Consider the following 92-residue polypeptide: Large ribosomal subunit protein eL43y (92 aa).

Residues 39–60 (CEFCGKYGVKRKAVGIWGCKDC) form a C4-type zinc finger.

Belongs to the eukaryotic ribosomal protein eL43 family.

This chain is Large ribosomal subunit protein eL43y (RPL37AC), found in Arabidopsis thaliana (Mouse-ear cress).